We begin with the raw amino-acid sequence, 417 residues long: Tol-Pal system protein TolB (417 aa).

The N-terminal stretch at 1-16 (MKYLWLFLIYAIGLFA) is a signal peptide.

The protein belongs to the TolB family. As to quaternary structure, the Tol-Pal system is composed of five core proteins: the inner membrane proteins TolA, TolQ and TolR, the periplasmic protein TolB and the outer membrane protein Pal. They form a network linking the inner and outer membranes and the peptidoglycan layer.

The protein localises to the periplasm. In terms of biological role, part of the Tol-Pal system, which plays a role in outer membrane invagination during cell division and is important for maintaining outer membrane integrity. This chain is Tol-Pal system protein TolB, found in Helicobacter pylori (strain J99 / ATCC 700824) (Campylobacter pylori J99).